A 324-amino-acid polypeptide reads, in one-letter code: Hydroxyacylglutathione hydrolase 2, mitochondrial (324 aa).

The N-terminal 64 residues, 1-64 (MQTISKASSA…KSIRVSKFCS (64 aa)), are a transit peptide targeting the mitochondrion. Positions 124 and 126 each coordinate Zn(2+). Fe cation-binding residues include Asp-128 and His-129. Zn(2+) is bound by residues His-182 and Asp-201. 2 residues coordinate Fe cation: Asp-201 and His-239.

It belongs to the metallo-beta-lactamase superfamily. Glyoxalase II family. In terms of assembly, monomer. The cofactor is Fe(3+). Fe(2+) serves as cofactor. Requires Zn(2+) as cofactor.

The protein localises to the mitochondrion. It catalyses the reaction an S-(2-hydroxyacyl)glutathione + H2O = a 2-hydroxy carboxylate + glutathione + H(+). It participates in secondary metabolite metabolism; methylglyoxal degradation; (R)-lactate from methylglyoxal: step 2/2. In terms of biological role, thiolesterase that catalyzes the hydrolysis of S-D-lactoyl-glutathione to form glutathione and D-lactic acid. The chain is Hydroxyacylglutathione hydrolase 2, mitochondrial from Arabidopsis thaliana (Mouse-ear cress).